A 320-amino-acid polypeptide reads, in one-letter code: Protoheme IX farnesyltransferase (320 aa).

The tract at residues 1-24 (MSMITERPVSDPAGQSVSATGDGA) is disordered. 8 helical membrane passes run 33-55 (AVVA…VTTV), 68-88 (LWLM…ASVL), 117-137 (NALI…AVFT), 140-160 (LAAG…TAWL), 183-203 (WAAV…VVFF), 241-261 (ILVF…LGAG), 262-282 (MGPI…VEAH), and 300-320 (FHWS…DALI).

The protein belongs to the UbiA prenyltransferase family. Protoheme IX farnesyltransferase subfamily.

The protein resides in the cell membrane. It carries out the reaction heme b + (2E,6E)-farnesyl diphosphate + H2O = Fe(II)-heme o + diphosphate. It functions in the pathway porphyrin-containing compound metabolism; heme O biosynthesis; heme O from protoheme: step 1/1. Functionally, converts heme B (protoheme IX) to heme O by substitution of the vinyl group on carbon 2 of heme B porphyrin ring with a hydroxyethyl farnesyl side group. The protein is Protoheme IX farnesyltransferase of Salinispora tropica (strain ATCC BAA-916 / DSM 44818 / JCM 13857 / NBRC 105044 / CNB-440).